We begin with the raw amino-acid sequence, 85 residues long: Latartoxin-1a (85 aa).

Residues Met1 to Ser19 form the signal peptide. Positions Ala20 to Arg25 are cleaved as a propeptide — removed in mature form. Positions Glu22–Arg25 match the Processing quadruplet motif motif. 4 disulfides stabilise this stretch: Cys27/Cys42, Cys34/Cys47, Cys41/Cys64, and Cys49/Cys62.

The protein belongs to the neurotoxin 19 (CSTX) family. Contains 4 disulfide bonds. Post-translationally, cleavage of the propeptide depends on the processing quadruplet motif (XXXR, with at least one of X being E). As to expression, expressed by the venom gland.

The protein localises to the secreted. Insect toxin. Causes paralysis in larvae of C.vicina by depolarizing membranes at the neuromuscular junction. This chain is Latartoxin-1a, found in Lachesana tarabaevi (Spider).